The sequence spans 203 residues: Glycerol-3-phosphate acyltransferase (203 aa).

A run of 5 helical transmembrane segments spans residues 10–30 (LLLG…FGIM), 60–80 (LAAF…VFLA), 88–108 (AAQL…FLGF), 118–138 (LGTL…IWAI), and 162–182 (FTLG…LIFL).

Belongs to the PlsY family. Probably interacts with PlsX.

The protein resides in the cell inner membrane. It catalyses the reaction an acyl phosphate + sn-glycerol 3-phosphate = a 1-acyl-sn-glycero-3-phosphate + phosphate. The protein operates within lipid metabolism; phospholipid metabolism. In terms of biological role, catalyzes the transfer of an acyl group from acyl-phosphate (acyl-PO(4)) to glycerol-3-phosphate (G3P) to form lysophosphatidic acid (LPA). This enzyme utilizes acyl-phosphate as fatty acyl donor, but not acyl-CoA or acyl-ACP. This chain is Glycerol-3-phosphate acyltransferase, found in Jannaschia sp. (strain CCS1).